Consider the following 587-residue polypeptide: Polyadenylate-binding protein-interacting protein 3 (587 aa).

One can recognise a Sm domain in the interval 51-132 (LLVYFTTCNI…LVQVIAKDLP (82 aa)). A disordered region spans residues 422–503 (AKSENSSGWP…QSPQSPVFDG (82 aa)). Residues 431–464 (PGSSISRNSENSAASSASNLPILSPSSSGSLSSE) are compositionally biased toward low complexity. A PAM2-like 1; degenerate motif is present at residues 467–475 (TLNPNAKEF). Residues 476–486 (KLNPNAKSFKP) carry the PAM2-like 2 motif. Positions 486–498 (PSPSATRPQSPQS) are enriched in polar residues.

This Arabidopsis thaliana (Mouse-ear cress) protein is Polyadenylate-binding protein-interacting protein 3 (CID3).